A 32-amino-acid chain; its full sequence is Cytochrome b6-f complex subunit 7 (32 aa).

The chain crosses the membrane as a helical span at residues Ala9–Leu27.

This sequence belongs to the PetM family. As to quaternary structure, the 4 large subunits of the cytochrome b6-f complex are cytochrome b6, subunit IV (17 kDa polypeptide, PetD), cytochrome f and the Rieske protein, while the 4 small subunits are PetG, PetL, PetM and PetN. The complex functions as a dimer.

Its subcellular location is the cellular thylakoid membrane. Component of the cytochrome b6-f complex, which mediates electron transfer between photosystem II (PSII) and photosystem I (PSI), cyclic electron flow around PSI, and state transitions. This Synechococcus sp. (strain CC9311) protein is Cytochrome b6-f complex subunit 7.